The sequence spans 120 residues: UPF0102 protein Daro_0503 (120 aa).

Residues 1–20 (MQVKANDTTTARGREAEDRA) form a disordered region.

This sequence belongs to the UPF0102 family.

In Dechloromonas aromatica (strain RCB), this protein is UPF0102 protein Daro_0503.